Reading from the N-terminus, the 234-residue chain is Elongation factor Tu (234 aa).

The region spanning 1 to 125 is the tr-type G domain; the sequence is KNMITGAAQM…EVDAFIPTPE (125 aa). 47–50 is a binding site for GTP; that stretch reads NKQD.

This sequence belongs to the TRAFAC class translation factor GTPase superfamily. Classic translation factor GTPase family. EF-Tu/EF-1A subfamily. As to quaternary structure, monomer.

The protein resides in the cytoplasm. It carries out the reaction GTP + H2O = GDP + phosphate + H(+). Functionally, GTP hydrolase that promotes the GTP-dependent binding of aminoacyl-tRNA to the A-site of ribosomes during protein biosynthesis. In Prochlorothrix hollandica, this protein is Elongation factor Tu (tufA).